A 112-amino-acid chain; its full sequence is Protein F-112 (112 aa).

Essential for virus function. The sequence is that of Protein F-112 from Saccharolobus solfataricus (Sulfolobus solfataricus).